Here is a 161-residue protein sequence, read N- to C-terminus: Regulator of ribonuclease activity A (161 aa).

The protein belongs to the RraA family. Homotrimer. Binds to both RNA-binding sites in the C-terminal region of Rne and to RhlB.

It localises to the cytoplasm. Functionally, globally modulates RNA abundance by binding to RNase E (Rne) and regulating its endonucleolytic activity. Can modulate Rne action in a substrate-dependent manner by altering the composition of the degradosome. Modulates RNA-binding and helicase activities of the degradosome. This is Regulator of ribonuclease activity A from Salmonella agona (strain SL483).